A 339-amino-acid polypeptide reads, in one-letter code: DnaJ homolog subfamily C member 22 (339 aa).

In terms of domain architecture, TM2 spans 4–50; the sequence is GLLMTYVLWALGGPVGLHHLYLGRDSHALLWMLTLGGGGLGWLWEFW. The next 7 membrane-spanning stretches (helical) occupy residues 5–25, 30–50, 81–101, 105–125, 135–155, 185–205, and 218–238; these read LLMT…HLYL, HALL…WEFW, FASQ…SLSS, FYIV…AAVG, LGAA…ILPI, VGLA…YNTA, and FLSW…VLLL. The J domain occupies 277–339; the sequence is LAHQVLGVPE…LSQPKKPRAS (63 aa).

It is found in the membrane. In terms of biological role, may function as a co-chaperone. The polypeptide is DnaJ homolog subfamily C member 22 (Dnajc22) (Mus musculus (Mouse)).